An 846-amino-acid chain; its full sequence is DNA mismatch repair protein MutS (846 aa).

610–617 (GPNMGGKS) lines the ATP pocket.

Belongs to the DNA mismatch repair MutS family.

Its function is as follows. This protein is involved in the repair of mismatches in DNA. It is possible that it carries out the mismatch recognition step. This protein has a weak ATPase activity. This chain is DNA mismatch repair protein MutS, found in Legionella pneumophila (strain Paris).